Consider the following 302-residue polypeptide: Oxygen-dependent coproporphyrinogen-III oxidase (302 aa).

A substrate-binding site is contributed by S90. Positions 94 and 104 each coordinate a divalent metal cation. Residue H104 is the Proton donor of the active site. 106-108 serves as a coordination point for substrate; that stretch reads NVR. The a divalent metal cation site is built by H143 and H173. An important for dimerization region spans residues 238-273; the sequence is YVEFNLIYDRGTIFGLQSNGRTESILLSMPPIVKWR.

Belongs to the aerobic coproporphyrinogen-III oxidase family. Homodimer. It depends on a divalent metal cation as a cofactor.

It is found in the cytoplasm. The catalysed reaction is coproporphyrinogen III + O2 + 2 H(+) = protoporphyrinogen IX + 2 CO2 + 2 H2O. The protein operates within porphyrin-containing compound metabolism; protoporphyrin-IX biosynthesis; protoporphyrinogen-IX from coproporphyrinogen-III (O2 route): step 1/1. Its function is as follows. Involved in the heme biosynthesis. Catalyzes the aerobic oxidative decarboxylation of propionate groups of rings A and B of coproporphyrinogen-III to yield the vinyl groups in protoporphyrinogen-IX. This Methylobacillus flagellatus (strain ATCC 51484 / DSM 6875 / VKM B-1610 / KT) protein is Oxygen-dependent coproporphyrinogen-III oxidase.